Reading from the N-terminus, the 446-residue chain is Iroquois-class homeodomain protein IRX-6 (446 aa).

The segment at residues Gly146–Asn208 is a DNA-binding region (homeobox). 2 disordered regions span residues Asn208 to Glu273 and Ala362 to Val394. Basic and acidic residues predominate over residues Lys217–Gly226. A compositionally biased stretch (acidic residues) spans Leu256–Glu273.

The protein belongs to the TALE/IRO homeobox family.

It localises to the nucleus. Functionally, transcription factor. Binds to the iroquois binding site (IBS) motif of target genes to regulate gene expression; functions as a transcriptional activator or repressor. Modulates expression of RCVRN, VSX1, BHLHE22/BHLHB5 and TACR3/Nk3r. Required downstream of retinal bipolar cell specification for the terminal differentiation of type 2, type 3a and possibly type 6 bipolar cells. This chain is Iroquois-class homeodomain protein IRX-6 (IRX6), found in Homo sapiens (Human).